The sequence spans 484 residues: tRNA-2-methylthio-N(6)-dimethylallyladenosine synthase (484 aa).

Residues 36–153 form the MTTase N-terminal domain; it reads GKLYIKTHGC…LPELIRARRE (118 aa). Residues Cys-45, Cys-82, Cys-116, Cys-190, Cys-194, and Cys-197 each contribute to the [4Fe-4S] cluster site. Residues 176-415 enclose the Radical SAM core domain; that stretch reads RAEGPSAFVS…HINAHAASIS (240 aa). One can recognise a TRAM domain in the interval 416–479; it reads QSMVGSVQRV…SNSLRGRIQL (64 aa). Residues 428-450 form a disordered region; the sequence is EGPSRRDPNELTGKSENMRPVNF.

The protein belongs to the methylthiotransferase family. MiaB subfamily. Monomer. It depends on [4Fe-4S] cluster as a cofactor.

Its subcellular location is the cytoplasm. It catalyses the reaction N(6)-dimethylallyladenosine(37) in tRNA + (sulfur carrier)-SH + AH2 + 2 S-adenosyl-L-methionine = 2-methylsulfanyl-N(6)-dimethylallyladenosine(37) in tRNA + (sulfur carrier)-H + 5'-deoxyadenosine + L-methionine + A + S-adenosyl-L-homocysteine + 2 H(+). In terms of biological role, catalyzes the methylthiolation of N6-(dimethylallyl)adenosine (i(6)A), leading to the formation of 2-methylthio-N6-(dimethylallyl)adenosine (ms(2)i(6)A) at position 37 in tRNAs that read codons beginning with uridine. This is tRNA-2-methylthio-N(6)-dimethylallyladenosine synthase from Xanthomonas euvesicatoria pv. vesicatoria (strain 85-10) (Xanthomonas campestris pv. vesicatoria).